A 165-amino-acid chain; its full sequence is uncharacterized protein (165 aa).

Residues 1–36 are disordered; the sequence is MTRLCLPRPEAREDPIPVPPRGLGAGEGSGSPVRPP. The helical transmembrane segment at 135–155 threads the bilayer; the sequence is LLLLMGLGPLLRACGMPLTLL.

The protein localises to the membrane. This is an uncharacterized protein from Homo sapiens (Human).